The sequence spans 584 residues: Putative poly(A) polymerase catalytic subunit (584 aa).

A compositionally biased stretch (basic and acidic residues) spans 522 to 531; that stretch reads EAEISEKEET. The disordered stretch occupies residues 522 to 584; the sequence is EAEISEKEET…ENSLDSLTSD (63 aa). Over residues 546–569 the composition is skewed to low complexity; that stretch reads SPNSSPNSSPNNSLNNSIDISTNN.

The protein belongs to the poxviridae poly(A) polymerase catalytic subunit family. Highly divergent.

It is found in the virion. It catalyses the reaction RNA(n) + ATP = RNA(n)-3'-adenine ribonucleotide + diphosphate. In terms of biological role, polymerase that creates the 3'-poly(A) tail of mRNA's. The sequence is that of Putative poly(A) polymerase catalytic subunit from Acanthamoeba polyphaga (Amoeba).